The following is a 466-amino-acid chain: UDP-glycosyltransferase 91B1 (466 aa).

Residues threonine 286, 342–344 (VPQ), 359–367 (HCGWGSAVE), and 381–384 (NLDQ) contribute to the UDP-alpha-D-glucose site.

The protein belongs to the UDP-glycosyltransferase family.

The polypeptide is UDP-glycosyltransferase 91B1 (UGT91B1) (Arabidopsis thaliana (Mouse-ear cress)).